A 46-amino-acid chain; its full sequence is Defensin Tk-AMP-D6.1 (46 aa).

4 disulfides stabilise this stretch: Cys-3-Cys-46, Cys-14-Cys-34, Cys-20-Cys-40, and Cys-24-Cys-42.

Plant defense peptide. This Triticum kiharae (Wheat) protein is Defensin Tk-AMP-D6.1.